The following is a 150-amino-acid chain: MGLEKSFILFSLLVLVLGWVQPSLGRKPSVQDFKRQHMDPGSSPNSRPTYCNQMMKRRGMTKGSCKRVNTFLHESWAKVQAICSQRQMTRKTSSKKNCHKSSSPLHITECRLKGSSKYPKCDYTTTNSQKHIIIACEGNPLVPVHLDARV.

The first 25 residues, 1–25 (MGLEKSFILFSLLVLVLGWVQPSLG), serve as a signal peptide directing secretion. Position 35 (arginine 35) interacts with substrate. The active-site Proton acceptor is the histidine 37. 3 disulfide bridges follow: cysteine 51/cysteine 110, cysteine 65/cysteine 121, and cysteine 83/cysteine 136. Substrate-binding positions include 66-70 (KRVNT), lysine 91, and arginine 111. Histidine 145 acts as the Proton donor in catalysis.

It belongs to the pancreatic ribonuclease family. As to quaternary structure, monomer.

It localises to the secreted. The enzyme catalyses an [RNA] containing cytidine + H2O = an [RNA]-3'-cytidine-3'-phosphate + a 5'-hydroxy-ribonucleotide-3'-[RNA].. It catalyses the reaction an [RNA] containing uridine + H2O = an [RNA]-3'-uridine-3'-phosphate + a 5'-hydroxy-ribonucleotide-3'-[RNA].. Endonuclease that catalyzes the cleavage of RNA on the 3' side of pyrimidine nucleotides. Acts on single-stranded and double-stranded RNA. This Rattus rattus (Black rat) protein is Ribonuclease pancreatic delta-type.